A 158-amino-acid polypeptide reads, in one-letter code: Protein BTG2 (158 aa).

Serine 147 bears the Phosphoserine; by MAPK1 and MAPK3 mark. Serine 149 is subject to Phosphoserine; by MAPK14.

This sequence belongs to the BTG family. In terms of assembly, interacts with PRKCABP. Interacts with CNOT7 and CNOT8; indicative for an association with the CCR4-NOT complex. Interacts with PIN1, inducing mitochondrial depolarization. Post-translationally, phosphorylated at Ser-147 by MAPK1/ERK2 and MAPK3/ERK1, and at Ser-149 by MAPK14, leading to PIN1-binding and mitochondrial depolarization. In brain at embryonic day 13.5, placenta, amnion, and spleen, which are proliferating and/or differentiating.

Functionally, anti-proliferative protein; the function is mediated by association with deadenylase subunits of the CCR4-NOT complex. Activates mRNA deadenylation in a CNOT6 and CNOT7-dependent manner. In vitro can inhibit deadenylase activity of CNOT7 and CNOT8. Involved in cell cycle regulation. Could be involved in the growth arrest and differentiation of the neuronal precursors. Modulates transcription regulation mediated by ESR1. Involved in mitochondrial depolarization and neurite outgrowth. The polypeptide is Protein BTG2 (Btg2) (Rattus norvegicus (Rat)).